The chain runs to 593 residues: Sodium-independent sulfate anion transporter (593 aa).

Residues 1 to 34 (MAPDTCCCSATALRRRLPVLAWVPDYSLQWLRLD) are Extracellular-facing. Residues 35–55 (FIAGLSVGLTVIPQALAYAEV) form a helical membrane-spanning segment. Ala-56 is a topological domain (cytoplasmic). The helical transmembrane segment at 57-77 (GLPPQYGLYSAFMGCFVYFFL) threads the bilayer. The Extracellular portion of the chain corresponds to 78-82 (GTSRD). A helical membrane pass occupies residues 83 to 100 (VTLGPTAIMSLLVSFYTF). Topologically, residues 101-106 (REPAYA) are cytoplasmic. A helical transmembrane segment spans residues 107–127 (VLLAFLSGCIQLAMGLLHLGF). The Extracellular segment spans residues 128–176 (LLDFISCPVIKGFTSAASITIGFGQIKNLLGLQKIPRQFFLQVYHTFLH). The chain crosses the membrane as a helical span at residues 177–197 (IGETRVGDAVLGLASMLLLLV). At 198-233 (LKCMREHMPPPHPEMPLAVKFSRGLVWTVTTARNAL) the chain is on the cytoplasmic side. Residues 234 to 254 (VVSSAALIAYAFEVTGSHPFV) form a helical membrane-spanning segment. Residues 255–287 (LTGKIAEGLPPVRIPPFSVTRDNKTISFSEMVQ) are Extracellular-facing. A helical membrane pass occupies residues 288–308 (DMGAGLAVVPLMGLLESIAVA). At 309–324 (KSFASQNNYRIDANQE) the chain is on the cytoplasmic side. Residues 325–345 (LLAIGLTNVLGSLVSSYPVTG) form a helical membrane-spanning segment. The Extracellular portion of the chain corresponds to 346–361 (SFGRTAVNAQTGVCTP). The chain crosses the membrane as a helical span at residues 362–382 (AGGLVTGALVLLSLNYLTSLF). Position 383 (Ser-383) is a topological domain, cytoplasmic. A helical transmembrane segment spans residues 384–404 (YIPKSALAAVIITAVTPLFDV). Residues 405–417 (KIFRSLWRVQRLD) lie on the Extracellular side of the membrane. Residues 418–438 (LLPLCVTFLLSFWEIQYGILA) form a helical membrane-spanning segment. Residues 439–593 (GSLVSLLILL…SSLLKSPSGP (155 aa)) lie on the Cytoplasmic side of the membrane. In terms of domain architecture, STAS spans 453 to 566 (RPKTQVSEGQ…EEAEKFLQQE (114 aa)). The interval 564–593 (QQEPGTEPNSIHEDAVPEQRSSLLKSPSGP) is disordered. The segment covering 582-593 (QRSSLLKSPSGP) has biased composition (polar residues).

The protein belongs to the SLC26A/SulP transporter (TC 2.A.53) family. In terms of tissue distribution, abundantly expressed in the cerebellum, with a predominant expression in Purkinje cells (at protein level). Predominantly expressed in the kidney and brain. In the kidney localizes in collecting duct intercalated cells (at protein level). As to expression, predominantly expressed in the brain with lower levels in the kidney.

It localises to the cell membrane. The protein resides in the lysosome membrane. The protein localises to the apical cell membrane. Its subcellular location is the basolateral cell membrane. The enzyme catalyses hydrogencarbonate(in) + chloride(out) = hydrogencarbonate(out) + chloride(in). It catalyses the reaction sulfate(in) + H(+)(in) = sulfate(out) + H(+)(out). The catalysed reaction is oxalate(in) + chloride(out) = oxalate(out) + chloride(in). Its function is as follows. Sodium-independent anion exchanger mediating bicarbonate, chloride, sulfate and oxalate transport. Exhibits sodium-independent sulfate anion transporter activity that may cooperate with SLC26A2 to mediate DIDS-sensitive sulfate uptake into high endothelial venules endothelial cells (HEVEC). In the kidney, mediates chloride-bicarbonate exchange, facilitating V-ATPase-mediated acid secretion. May function as a chloride channel, playing an important role in moderating chloride homeostasis and neuronal activity in the cerebellum. This Mus musculus (Mouse) protein is Sodium-independent sulfate anion transporter.